Here is a 204-residue protein sequence, read N- to C-terminus: Probable nicotinate-nucleotide adenylyltransferase (204 aa).

Belongs to the NadD family.

The enzyme catalyses nicotinate beta-D-ribonucleotide + ATP + H(+) = deamido-NAD(+) + diphosphate. The protein operates within cofactor biosynthesis; NAD(+) biosynthesis; deamido-NAD(+) from nicotinate D-ribonucleotide: step 1/1. Its function is as follows. Catalyzes the reversible adenylation of nicotinate mononucleotide (NaMN) to nicotinic acid adenine dinucleotide (NaAD). This Mycolicibacterium gilvum (strain PYR-GCK) (Mycobacterium gilvum (strain PYR-GCK)) protein is Probable nicotinate-nucleotide adenylyltransferase.